The chain runs to 594 residues: Estrogen receptor (594 aa).

The segment at 1–184 is modulating (transactivation AF-1); mediates interaction with MACROD1; it reads MTMTLHTKAS…AMESAKETRY (184 aa). O-linked (GlcNAc) serine glycosylation occurs at serine 10. The tract at residues 35–47 is required for interaction with NCOA1; that stretch reads LERPLGEVYVESS. The segment at 35 to 174 is interaction with DDX5; self-association; sequence LERPLGEVYV…LASSGDKGSM (140 aa). Residues serine 104 and serine 106 each carry the phosphoserine; by CDK2 modification. At serine 118 the chain carries Phosphoserine. The tract at residues 152–173 is disordered; sequence PNADNRRQGGRERLASSGDKGS. Basic and acidic residues predominate over residues 154 to 165; sequence ADNRRQGGRERL. Serine 167 carries the phosphoserine; by CK2 modification. NR C4-type zinc fingers lie at residues 185-205 and 221-245; these read CAVC…CEGC and CPAT…LRKC. A DNA-binding region (nuclear receptor) is located at residues 185-250; it reads CAVCNDYASG…RLRKCYEVGM (66 aa). The segment at 185-310 is mediates interaction with DNTTIP2; sequence CAVCNDYASG…TKKISPVLSL (126 aa). Positions 251–310 are hinge; the sequence is MKGGIRKDRRGGRMLKHKRQRDDGEGRNEAGPSGDRRPANFWPSPLLIKHTKKISPVLSL. Over residues 257–269 the composition is skewed to basic residues; the sequence is KDRRGGRMLKHKR. Residues 257–293 form a disordered region; that stretch reads KDRRGGRMLKHKRQRDDGEGRNEAGPSGDRRPANFWP. Arginine 260 is modified (asymmetric dimethylarginine; by PRMT1). Residues 262–594 are interaction with AKAP13; the sequence is GRMLKHKRQR…GEAEGFPNTI (333 aa). Residues 264 to 594 form a self-association region; sequence MLKHKRQRDD…GEAEGFPNTI (331 aa). Residues 270-288 show a composition bias toward basic and acidic residues; sequence QRDDGEGRNEAGPSGDRRP. The 236-residue stretch at 311–546 folds into the NR LBD domain; it reads TAEQMISALL…DLLLEMLDAH (236 aa). Positions 311–594 are transactivation AF-2; the sequence is TAEQMISALL…GEAEGFPNTI (284 aa). Glutamate 353 and arginine 394 together coordinate 17beta-estradiol. The S-palmitoyl cysteine moiety is linked to residue cysteine 447. Position 523 (histidine 523) interacts with 17beta-estradiol. Tyrosine 536 carries the post-translational modification Phosphotyrosine; by Tyr-kinases. A disordered region spans residues 551–575; that stretch reads PANHGGAPMEETNQSQLATTGSTSP. Polar residues predominate over residues 561-575; the sequence is ETNQSQLATTGSTSP. Threonine 570 carries an O-linked (GlcNAc) threonine glycan.

The protein belongs to the nuclear hormone receptor family. NR3 subfamily. Binds DNA as a homodimer. Can form a heterodimer with ESR2. Interacts with coactivator NCOA5. Interacts with PELP1, the interaction is enhanced by 17-beta-estradiol; the interaction increases ESR1 transcriptional activity. Interacts with NCOA7; the interaction is ligand-inducible. Interacts with AKAP13, CUEDC2, HEXIM1, KDM5A, MAP1S, SMARD1, and UBE1C. Interacts with MUC1; the interaction is stimulated by 7 beta-estradiol (E2) and enhances ESR1-mediated transcription. Interacts with DNTTIP2, and UIMC1. Interacts with KMT2D/MLL2. Interacts with ATAD2; the interaction is enhanced by estradiol. Interacts with KIF18A and LDB1. Interacts with RLIM (via its C-terminus). Interacts with MACROD1. Interacts with SH2D4A and PLCG. Interacts with SH2D4A; the interaction blocks binding to PLCG and inhibits estrogen-induced cell proliferation. Interacts with DYNLL1. Interacts with CCDC62; the interaction requires estradiol and appears to enhance the transcription of target genes. Interacts with NR2C1; the interaction prevents homodimerization of ESR1 and suppresses its transcriptional activity and cell growth. Interacts with DNAAF4. Interacts with PRMT2. Interacts with RBFOX2. Interacts with EP300; the interaction is estrogen-dependent and enhanced by CITED1. Interacts with CITED1; the interaction is estrogen-dependent. Interacts with FAM120B, FOXL2, PHB2 and SLC30A9. Interacts with coactivators NCOA3 and NCOA6. Interacts with STK3/MST2 only in the presence of SAV1 and vice-versa. Binds to CSNK1D. Interacts with NCOA2; NCOA2 can interact with ESR1 AF-1 and AF-2 domains simultaneously and mediate their transcriptional synergy. Interacts with DDX5. Interacts with NCOA1; the interaction seems to require a self-association of N-terminal and C-terminal regions. Interacts with ZNF366, DDX17, NFKB1, RELA, SP1 and SP3. Interacts with NRIP1. Interacts with GPER1; the interaction occurs in an estrogen-dependent manner. Interacts with CLOCK and the interaction is stimulated by estrogen. Interacts with TRIP4 (ufmylated); estrogen dependent. Interacts with LMTK3; the interaction phosphorylates ESR1 (in vitro) and protects it against proteasomal degradation. Interacts with CCAR2 (via N-terminus) in a ligand-independent manner. Interacts with ZFHX3. Interacts with SFR1 in a ligand-dependent and -independent manner. Interacts with DCAF13, LATS1 and DCAF1; regulates ESR1 ubiquitination and ubiquitin-mediated proteasomal degradation. Interacts (via DNA-binding domain) with POU4F2 (C-terminus); this interaction increases the estrogen receptor ESR1 transcriptional activity in a DNA- and ligand 17-beta-estradiol-independent manner. Interacts with ESRRB isoform 1. Interacts with UBE3A and WBP2. Interacts with GTF2B. Interacts with RBM39. In the absence of hormonal ligand, interacts with TACC1. Interacts with PI3KR1 or PI3KR2 and PTK2/FAK1. Interacts with SRC. Interacts with BAG1; the interaction is promoted in the absence of estradiol (17-beta-estradiol/E2). Interacts with and ubiquitinated by STUB1; the interaction is promoted in the absence of estradiol (17-beta-estradiol/E2). Interacts with NEDD8. In terms of processing, ubiquitinated; regulated by LATS1 via DCAF1 it leads to ESR1 proteasomal degradation. Deubiquitinated by OTUB1. Ubiquitinated by STUB1/CHIP; in the CA1 hippocampal region following loss of endogenous circulating estradiol (17-beta-estradiol/E2). Ubiquitinated by UBR5, leading to its degradation: UBR5 specifically recognizes and binds ligand-bound ESR1 when it is not associated with coactivators (NCOAs). In presence of NCOAs, the UBR5-degron is not accessible, preventing its ubiquitination and degradation. Post-translationally, phosphorylated by cyclin A/CDK2 and CK1. Phosphorylation probably enhances transcriptional activity. Dephosphorylation at Ser-118 by PPP5C inhibits its transactivation activity. Phosphorylated by LMTK3 (in vitro). Palmitoylated at Cys-447 by ZDHHC7 and ZDHHC21. Palmitoylation is required for plasma membrane targeting and for rapid intracellular signaling via ERK and AKT kinases and cAMP generation, but not for signaling mediated by the nuclear hormone receptor. In terms of processing, dimethylated by PRMT1 at Arg-260. The methylation may favor cytoplasmic localization. Demethylated by JMJD6 at Arg-260.

The protein localises to the nucleus. Its subcellular location is the cytoplasm. The protein resides in the golgi apparatus. It is found in the cell membrane. Its function is as follows. Nuclear hormone receptor. The steroid hormones and their receptors are involved in the regulation of eukaryotic gene expression and affect cellular proliferation and differentiation in target tissues. Ligand-dependent nuclear transactivation involves either direct homodimer binding to a palindromic estrogen response element (ERE) sequence or association with other DNA-binding transcription factors, such as AP-1/c-Jun, c-Fos, ATF-2, Sp1 and Sp3, to mediate ERE-independent signaling. Ligand binding induces a conformational change allowing subsequent or combinatorial association with multiprotein coactivator complexes through LXXLL motifs of their respective components. Mutual transrepression occurs between the estrogen receptor (ER) and NF-kappa-B in a cell-type specific manner. Decreases NF-kappa-B DNA-binding activity and inhibits NF-kappa-B-mediated transcription from the IL6 promoter and displace RELA/p65 and associated coregulators from the promoter. Recruited to the NF-kappa-B response element of the CCL2 and IL8 promoters and can displace CREBBP. Present with NF-kappa-B components RELA/p65 and NFKB1/p50 on ERE sequences. Can also act synergistically with NF-kappa-B to activate transcription involving respective recruitment adjacent response elements; the function involves CREBBP. Can activate the transcriptional activity of TFF1. Also mediates membrane-initiated estrogen signaling involving various kinase cascades. Essential for MTA1-mediated transcriptional regulation of BRCA1 and BCAS3. Maintains neuronal survival in response to ischemic reperfusion injury when in the presence of circulating estradiol (17-beta-estradiol/E2). In Equus caballus (Horse), this protein is Estrogen receptor (ESR1).